Consider the following 488-residue polypeptide: uncharacterized protein (488 aa).

I27–A38 lines the NAD(+) pocket.

It belongs to the mannitol dehydrogenase family. UxuB subfamily.

This is an uncharacterized protein from Escherichia coli (strain K12).